The following is a 426-amino-acid chain: Glutamyl-tRNA reductase (426 aa).

Residues Thr-49–Arg-52, Ser-109, Glu-114–Gln-116, and Gln-120 each bind substrate. Cys-50 serves as the catalytic Nucleophile. Residue Gly-189–Gly-194 participates in NADP(+) binding.

Belongs to the glutamyl-tRNA reductase family. As to quaternary structure, homodimer.

The catalysed reaction is (S)-4-amino-5-oxopentanoate + tRNA(Glu) + NADP(+) = L-glutamyl-tRNA(Glu) + NADPH + H(+). It participates in porphyrin-containing compound metabolism; protoporphyrin-IX biosynthesis; 5-aminolevulinate from L-glutamyl-tRNA(Glu): step 1/2. In terms of biological role, catalyzes the NADPH-dependent reduction of glutamyl-tRNA(Glu) to glutamate 1-semialdehyde (GSA). This is Glutamyl-tRNA reductase (hemA) from Chlorobaculum parvum (strain DSM 263 / NCIMB 8327) (Chlorobium vibrioforme subsp. thiosulfatophilum).